Consider the following 872-residue polypeptide: Leucine--tRNA ligase (872 aa).

The 'HIGH' region signature appears at 42 to 52 (PYPSGNLHMGH). A 'KMSKS' region motif is present at residues 631–635 (KMSKS). Position 634 (K634) interacts with ATP.

It belongs to the class-I aminoacyl-tRNA synthetase family.

It localises to the cytoplasm. The catalysed reaction is tRNA(Leu) + L-leucine + ATP = L-leucyl-tRNA(Leu) + AMP + diphosphate. The chain is Leucine--tRNA ligase from Blochmanniella pennsylvanica (strain BPEN).